The chain runs to 330 residues: Aspartate--ammonia ligase (330 aa).

Belongs to the class-II aminoacyl-tRNA synthetase family. AsnA subfamily.

It is found in the cytoplasm. The enzyme catalyses L-aspartate + NH4(+) + ATP = L-asparagine + AMP + diphosphate + H(+). Its pathway is amino-acid biosynthesis; L-asparagine biosynthesis; L-asparagine from L-aspartate (ammonia route): step 1/1. This is Aspartate--ammonia ligase from Haemophilus ducreyi (strain 35000HP / ATCC 700724).